The sequence spans 354 residues: Ubiquitin-conjugating enzyme E2 Z (354 aa).

Residues 1–21 form a disordered region; sequence MAESPTEEAATAGAGAAGPGA. Positions 99 to 253 constitute a UBC core domain; sequence QCLLRIKRDI…IRHETIRVAV (155 aa). Cysteine 188 functions as the Glycyl thioester intermediate in the catalytic mechanism. The disordered stretch occupies residues 332–354; it reads NAEMDSDSSSSGTETDLHGSLRV. Position 337 is a phosphoserine (serine 337).

Belongs to the ubiquitin-conjugating enzyme family. As to expression, widely expressed. Highly in placenta, pancreas, spleen and testis.

Its subcellular location is the cytoplasm. It is found in the nucleus. It carries out the reaction S-ubiquitinyl-[E1 ubiquitin-activating enzyme]-L-cysteine + [E2 ubiquitin-conjugating enzyme]-L-cysteine = [E1 ubiquitin-activating enzyme]-L-cysteine + S-ubiquitinyl-[E2 ubiquitin-conjugating enzyme]-L-cysteine.. It functions in the pathway protein modification; protein ubiquitination. In terms of biological role, catalyzes the covalent attachment of ubiquitin to other proteins. Specific substrate for UBA6, not charged with ubiquitin by UBE1. May be involved in apoptosis regulation. The protein is Ubiquitin-conjugating enzyme E2 Z (UBE2Z) of Homo sapiens (Human).